We begin with the raw amino-acid sequence, 156 residues long: MPRRREVPKRVVLPDPKYKEEVIAKFANVMMRDGKKSTAEKIVYGALEMVAERSKSDALEIFRKAIDNVRPVVEVKSRRVGGATYQVPVEIRSDRRMALAMRWLRDSARKRNEKSMGNRLAAEILEAAENRGNAVRKREETHRMAEANKAFAHFRW.

Belongs to the universal ribosomal protein uS7 family. Part of the 30S ribosomal subunit. Contacts proteins S9 and S11.

One of the primary rRNA binding proteins, it binds directly to 16S rRNA where it nucleates assembly of the head domain of the 30S subunit. Is located at the subunit interface close to the decoding center, probably blocks exit of the E-site tRNA. The sequence is that of Small ribosomal subunit protein uS7 from Acidithiobacillus ferrooxidans (strain ATCC 53993 / BNL-5-31) (Leptospirillum ferrooxidans (ATCC 53993)).